The chain runs to 350 residues: Small ribosomal subunit biogenesis GTPase RsgA (350 aa).

Positions 1–17 (MSKNKLSKGQQRRVNAN) are enriched in polar residues. Residues 1–27 (MSKNKLSKGQQRRVNANHQRRLKTSAE) form a disordered region. Positions 104 to 273 (TSVLTRPDFY…VIDSPGVREF (170 aa)) constitute a CP-type G domain. GTP is bound by residues 160-163 (NKID) and 214-222 (GQSGVGKSS). Zn(2+) contacts are provided by cysteine 297, cysteine 302, histidine 304, and cysteine 310.

Belongs to the TRAFAC class YlqF/YawG GTPase family. RsgA subfamily. Monomer. Associates with 30S ribosomal subunit, binds 16S rRNA. It depends on Zn(2+) as a cofactor.

Its subcellular location is the cytoplasm. One of several proteins that assist in the late maturation steps of the functional core of the 30S ribosomal subunit. Helps release RbfA from mature subunits. May play a role in the assembly of ribosomal proteins into the subunit. Circularly permuted GTPase that catalyzes slow GTP hydrolysis, GTPase activity is stimulated by the 30S ribosomal subunit. The sequence is that of Small ribosomal subunit biogenesis GTPase RsgA from Salmonella agona (strain SL483).